Here is a 637-residue protein sequence, read N- to C-terminus: Proton myo-inositol cotransporter (637 aa).

The Cytoplasmic segment spans residues 1–65; the sequence is MSRKASEDVE…AARRQFQRDE (65 aa). A Phosphoserine modification is found at Ser6. The segment at 16–38 is disordered; the sequence is LSSLMGERRRRQPEPGAPGGERS. Residues Ser44 and Ser47 each carry the phosphoserine modification. The chain crosses the membrane as a helical span at residues 66–86; sequence TPAFVYAAAAFSALGGFLFGY. Residues 87 to 114 lie on the Extracellular side of the membrane; the sequence is DTGVVSGAMLLLRRQMRLGAMWQELLVS. The helical transmembrane segment at 115–135 threads the bilayer; it reads GAVGAAAVAALAGGALNGALG. The Cytoplasmic portion of the chain corresponds to 136–137; the sequence is RR. The helical transmembrane segment at 138–158 threads the bilayer; sequence SAILLASALCTVGSAVLAAAA. Residues 159–167 lie on the Extracellular side of the membrane; the sequence is NKETLLAGR. A helical membrane pass occupies residues 168 to 188; the sequence is LVVGLGIGIASMTVPVYIAEV. Topologically, residues 189–201 are cytoplasmic; that stretch reads SPPNLRGRLVTIN. The chain crosses the membrane as a helical span at residues 202-222; the sequence is TLFITGGQFFASVVDGAFSYL. The Extracellular portion of the chain corresponds to 223–228; the sequence is QKDGWR. A helical membrane pass occupies residues 229 to 249; the sequence is YMLGLAAIPAVIQFLGFLFLP. The Cytoplasmic portion of the chain corresponds to 250 to 313; that stretch reads ESPRWLIQKG…RMLSYPPTRR (64 aa). A helical transmembrane segment spans residues 314–334; it reads ALAVGCGLQMFQQLSGINTIM. Topologically, residues 335-352 are extracellular; the sequence is YYSATILQMSGVEDDRLA. A helical transmembrane segment spans residues 353–373; that stretch reads IWLASITAFTNFIFTLVGVWL. Over 374 to 382 the chain is Cytoplasmic; that stretch reads VEKVGRRKL. A helical membrane pass occupies residues 383 to 403; it reads TFGSLAGTTVALTILALGFLL. At 404–497 the chain is on the extracellular side; that stretch reads SAQVSPRVTF…SFCPTPYSWT (94 aa). 3 N-linked (GlcNAc...) asparagine glycosylation sites follow: Asn422, Asn447, and Asn474. Residues 498–518 traverse the membrane as a helical segment; it reads ALVGLVLYLVFFAPGMGPMPW. Over 519-538 the chain is Cytoplasmic; that stretch reads TVNSEIYPLWARSTGNACSA. Residues 539–559 form a helical membrane-spanning segment; that stretch reads GINWIFNVLVSLTFLHTAEYL. The Extracellular portion of the chain corresponds to 560 to 562; the sequence is TYY. The chain crosses the membrane as a helical span at residues 563–583; sequence GAFFLYAGFAAVGLLFVYGCL. The Cytoplasmic segment spans residues 584-637; that stretch reads PETKGKKLEEIESLFDHRLCTCGTADSDEGRYIEYIRVKGSNYHLSDNDASDVE. Ser629 and Ser634 each carry phosphoserine.

The protein belongs to the major facilitator superfamily. Sugar transporter (TC 2.A.1.1) family.

It is found in the cell membrane. The catalysed reaction is myo-inositol(out) + H(+)(out) = myo-inositol(in) + H(+)(in). H(+)-myo-inositol cotransporter. Can also transport related stereoisomers. The protein is Proton myo-inositol cotransporter of Rattus norvegicus (Rat).